Consider the following 292-residue polypeptide: Nanos homolog 1 (292 aa).

Disordered stretches follow at residues 1 to 41 (MEAF…QPFS) and 68 to 121 (GGNG…SRGR). The interval 40 to 56 (FSSWNDYLGLATLITKA) is essential for its translational repressor activity. A compositionally biased stretch (low complexity) spans 76–87 (PPSSSSSSCCSP). Residues 104 to 115 (DYDEDDDDDSDE) show a composition bias toward acidic residues. A Nanos-type zinc finger spans residues 213-267 (VCVFCRNNKEAMALYTTHILKGPDGRVLCPVLRRYTCPLCGASGDNAHTIKYCPL). Positions 214, 217, 230, 241, 249, 252, 260, and 265 each coordinate Zn(2+). Short sequence motifs (C2HC) lie at residues 214-241 (CVFCRNNKEAMALYTTHILKGPDGRVLC) and 249-265 (CPLCGASGDNAHTIKYC). The tract at residues 268 to 292 (SKVPPPPARPPPRSARDGPPGKKLR) is disordered. The segment covering 269–280 (KVPPPPARPPPR) has biased composition (pro residues). The segment covering 281–292 (SARDGPPGKKLR) has biased composition (basic and acidic residues).

This sequence belongs to the nanos family. As to quaternary structure, interacts with PUM2, SNAPIN and CTNNB1. Interacts (via N-terminal region) with CTNND1. Interacts with DDX20 (via N-terminal region). As to expression, testis and ovary (at protein level). Predominantly expressed in testis. Specifically expressed during germline development. In adult tissues, it is mainly expressed in spermatogonia, the stem cells of the germline. Also expressed during meiosis in spermatocytes. Not present in late, post-meiotic stage germ cells. Expressed in fetal ovaries, while it is weakly or not expressed in mature postmeiotic oocytes, suggesting that it may be expressed in premeiotic female germ cells. Expressed at high levels only in the E-cadherin deficient cell lines. Highly expressed in lung carcinomas and mostly detected in invasive tumor cells and its expression correlates with tumor aggressiveness.

It is found in the cytoplasm. The protein localises to the perinuclear region. Its function is as follows. May act as a translational repressor which regulates translation of specific mRNAs by forming a complex with PUM2 that associates with the 3'-UTR of mRNA targets. Capable of interfering with the proadhesive and anti-invasive functions of E-cadherin. Up-regulates the production of MMP14 to promote tumor cell invasion. The polypeptide is Nanos homolog 1 (NANOS1) (Homo sapiens (Human)).